The following is a 604-amino-acid chain: MSKSLKHIKQQCRDRELVQEVIELVRRNDHDSLAYVARTLGIPPQLRFVVWPILLKYHPMCISPNIMSNTVVWDPLTSSYHLTNADAAQDVNSSGYVANGAANGSANGYEISKTSTNSSTSDDVVNEDMVHLEKIILKDLRKYFHSRATSSSQAVSSSSSSTAEPSSPTVSDECEIIDSLKNAILRFLSKWSRIFKYEIGLAWLALGLAEWFPALLPAKFDLNDECFLVLNGRRHAHTSSGNNNSTSISQLFQEYPLLDYLKNKLPSERLFTFDQLYERLLLVLIHSPDTALEQNKIKRDFPQDSTHISNYFPVISGGDLSFRTQIFFKVFSTILPELYQPLIEEVNLQPNSSRTSWLYWWFKCAGARSLQRQDRGRIWDLFLGWRPKPDHVTINFYLNYNTKSFAHLYHKSPSICHSKFWNKYEKNDTFWFPDLDSIPLGTPPYTHDVTIIKELLRRNKYEERASDSNDTDQECCMNSIPFSIISPHTQLIFIYVAILQFNEFKLLEFEETEIAEFLNNVPMLSKADDTAFKKLFDTGSTLDNVVLHDEASKRPSSSSNNHMLIEVGSDGKSSHSFNDLMKMAGDIWRKWLWRELEENLNNEP.

In terms of domain architecture, Rab-GAP TBC spans 41–386 (GIPPQLRFVV…RIWDLFLGWR (346 aa)).

Belongs to the OCA5 family.

Its subcellular location is the cytoplasm. This is Oxidant-induced cell-cycle arrest protein 5 (OCA5) from Candida glabrata (strain ATCC 2001 / BCRC 20586 / JCM 3761 / NBRC 0622 / NRRL Y-65 / CBS 138) (Yeast).